Here is an 827-residue protein sequence, read N- to C-terminus: Periplasmic nitrate reductase (827 aa).

Positions 1 to 32 (MNLSRRDFMKANAALAAASVAGLIIPVKNVNA) form a signal peptide, tat-type signal. Residues 37–93 (ITWDKAVCRFCGTGCAVLVGTKDGRVVASQGDPDAEVNRGLNCIKGYFLPKIMYGKD) form the 4Fe-4S Mo/W bis-MGD-type domain. Positions 44, 47, 51, and 79 each coordinate [4Fe-4S] cluster. Residues Lys81, Gln148, Asn173, Cys177, 210-217 (WGSNMAEM), 242-246 (STFEH), 261-263 (QSD), Met372, Gln376, Asn482, 508-509 (SD), Lys531, Asp558, and 717-726 (TGRILEHWHT) contribute to the Mo-bis(molybdopterin guanine dinucleotide) site. Substrate is bound at residue Phe793. Residues Asn801 and Lys818 each contribute to the Mo-bis(molybdopterin guanine dinucleotide) site.

Belongs to the prokaryotic molybdopterin-containing oxidoreductase family. NasA/NapA/NarB subfamily. In terms of assembly, component of the periplasmic nitrate reductase NapAB complex composed of NapA and NapB. It depends on [4Fe-4S] cluster as a cofactor. Requires Mo-bis(molybdopterin guanine dinucleotide) as cofactor. In terms of processing, predicted to be exported by the Tat system. The position of the signal peptide cleavage has not been experimentally proven.

It localises to the periplasm. The catalysed reaction is 2 Fe(II)-[cytochrome] + nitrate + 2 H(+) = 2 Fe(III)-[cytochrome] + nitrite + H2O. Functionally, catalytic subunit of the periplasmic nitrate reductase complex NapAB. Receives electrons from NapB and catalyzes the reduction of nitrate to nitrite. In Histophilus somni (strain 129Pt) (Haemophilus somnus), this protein is Periplasmic nitrate reductase.